We begin with the raw amino-acid sequence, 502 residues long: Xyloglucan-specific endo-beta-1,4-glucanase BoGH5A (502 aa).

Positions 1 to 32 are cleaved as a signal peptide; the sequence is MEKQSFSDGLFSPLGIKRVIFMLVLLTTSFIS. C33 is lipidated: N-palmitoyl cysteine. C33 carries S-diacylglycerol cysteine lipidation. In terms of domain architecture, BACON spans 67 to 127; the sequence is GPAEWHISTS…PDIIINVKQS (61 aa). Positions 165, 172, 251, and 296 each coordinate substrate. The active-site Proton donor is the E297. E430 (nucleophile) is an active-site residue. W472 lines the substrate pocket.

This sequence belongs to the glycosyl hydrolase 5 (cellulase A) family.

The protein resides in the cell outer membrane. It carries out the reaction xyloglucan + H2O = xyloglucan oligosaccharides.. It functions in the pathway glucan metabolism; xyloglucan degradation. In terms of biological role, catalyzes endohydrolysis of 1,4-beta-D-glucosidic linkages in xyloglucan with retention of the beta-configuration of the glycosyl residues in xyloglucan degradation. Cleaves the backbone of the 3 major types of natural xyloglucans (seed galactoxyloglucan from tamarind kernel, dicot fucogalactoxyloglucan from lettuce leaves, and solanaceous arabinogalactoxyloglucan from tomato fruit), to produce xyloglucan oligosaccharides. This chain is Xyloglucan-specific endo-beta-1,4-glucanase BoGH5A, found in Bacteroides ovatus (strain ATCC 8483 / DSM 1896 / JCM 5824 / BCRC 10623 / CCUG 4943 / NCTC 11153).